Reading from the N-terminus, the 192-residue chain is ATP synthase protein MI25 (192 aa).

A helical membrane pass occupies residues 29–49 (ISIYNEEMIVARCFIGFLIFS).

The protein belongs to the ATPase protein MI25 family. In terms of assembly, F-type ATPases have 2 components, CF(1) - the catalytic core - and CF(0) - the membrane proton channel. CF(1) has five subunits: alpha(3), beta(3), gamma(1), delta(1), epsilon(1). CF(0) has three main subunits: a, b and c.

It is found in the mitochondrion membrane. This is one of the chains of the nonenzymatic component (CF(0) subunit) of the mitochondrial ATPase complex. The protein is ATP synthase protein MI25 of Triticum timopheevii (Timopheev's wheat).